We begin with the raw amino-acid sequence, 289 residues long: NAD kinase (289 aa).

The active-site Proton acceptor is the Asp63. Residues 63–64 (DG), Arg68, 138–139 (ND), Arg149, Asp168, 179–184 (TGYSLS), and Gln238 each bind NAD(+).

It belongs to the NAD kinase family. A divalent metal cation serves as cofactor.

It is found in the cytoplasm. The catalysed reaction is NAD(+) + ATP = ADP + NADP(+) + H(+). Its function is as follows. Involved in the regulation of the intracellular balance of NAD and NADP, and is a key enzyme in the biosynthesis of NADP. Catalyzes specifically the phosphorylation on 2'-hydroxyl of the adenosine moiety of NAD to yield NADP. The sequence is that of NAD kinase from Gemmatimonas aurantiaca (strain DSM 14586 / JCM 11422 / NBRC 100505 / T-27).